The primary structure comprises 320 residues: Mycothiol acetyltransferase (320 aa).

N-acetyltransferase domains follow at residues 16 to 141 (RQVR…RSLR) and 152 to 320 (LQIR…AALA). Glu-36 serves as a coordination point for 1D-myo-inositol 2-(L-cysteinylamino)-2-deoxy-alpha-D-glucopyranoside. Residues 80–82 (LVV) and 88–93 (RRGIAT) each bind acetyl-CoA. 3 residues coordinate 1D-myo-inositol 2-(L-cysteinylamino)-2-deoxy-alpha-D-glucopyranoside: Glu-179, Lys-229, and Glu-239. Residues 243-245 (LGV) and 250-256 (QGRGLGR) each bind acetyl-CoA. Tyr-284 provides a ligand contact to 1D-myo-inositol 2-(L-cysteinylamino)-2-deoxy-alpha-D-glucopyranoside. An acetyl-CoA-binding site is contributed by 289–294 (NIAAVR).

The protein belongs to the acetyltransferase family. MshD subfamily. Monomer.

It catalyses the reaction 1D-myo-inositol 2-(L-cysteinylamino)-2-deoxy-alpha-D-glucopyranoside + acetyl-CoA = mycothiol + CoA + H(+). Catalyzes the transfer of acetyl from acetyl-CoA to desacetylmycothiol (Cys-GlcN-Ins) to form mycothiol. The protein is Mycothiol acetyltransferase of Mycobacterium marinum (strain ATCC BAA-535 / M).